Consider the following 263-residue polypeptide: Probable adenylate kinase 7, mitochondrial (263 aa).

The transit peptide at 1 to 30 (MAWLSRVRGVSPVTRLAAIRRSFGSAAALE) directs the protein to the mitochondrion. 72–77 (GAWRHV) provides a ligand contact to ATP. Positions 92–121 (SMGSLVRQELNPRSSLYKEIASAVNERKLV) are NMP. AMP is bound by residues arginine 98, 119–121 (KLV), 149–152 (GIPR), glutamine 156, and arginine 206. Position 234 (glycine 234) interacts with ATP.

The protein belongs to the adenylate kinase family. In terms of assembly, monomer.

The protein resides in the mitochondrion. It carries out the reaction AMP + ATP = 2 ADP. In terms of biological role, catalyzes the reversible transfer of the terminal phosphate group between ATP and AMP. Plays an important role in cellular energy homeostasis and in adenine nucleotide metabolism. This chain is Probable adenylate kinase 7, mitochondrial, found in Arabidopsis thaliana (Mouse-ear cress).